The chain runs to 250 residues: Probable dihydroorotate dehydrogenase B (NAD(+)), electron transfer subunit (250 aa).

The region spanning 1–89 is the FAD-binding FR-type domain; sequence MINLKIEENV…RGPYGNGFDV (89 aa). 4 residues coordinate [2Fe-2S] cluster: Cys-200, Cys-205, Cys-208, and Cys-216.

It belongs to the PyrK family. Heterotetramer of 2 PyrK and 2 PyrD type B subunits. It depends on [2Fe-2S] cluster as a cofactor. FAD is required as a cofactor.

It functions in the pathway pyrimidine metabolism; UMP biosynthesis via de novo pathway; orotate from (S)-dihydroorotate (NAD(+) route): step 1/1. Its function is as follows. Responsible for channeling the electrons from the oxidation of dihydroorotate from the FMN redox center in the PyrD type B subunit to the ultimate electron acceptor NAD(+). The sequence is that of Probable dihydroorotate dehydrogenase B (NAD(+)), electron transfer subunit from Thermoplasma volcanium (strain ATCC 51530 / DSM 4299 / JCM 9571 / NBRC 15438 / GSS1).